Here is a 662-residue protein sequence, read N- to C-terminus: PsbB mRNA maturation factor Mbb1, chloroplastic (662 aa).

A chloroplast-targeting transit peptide spans 1 to 50 (MSLVPFSQLWRGVRTRGPVEQASSSSSSSSSSRRTWYAPARSQTGVQVAA). Disordered regions lie at residues 14-38 (RTRG…TWYA) and 75-101 (IIAD…RDEA). Residues 23–32 (SSSSSSSSSS) show a composition bias toward low complexity. Positions 88–101 (EGERGDATGSRDEA) are enriched in basic and acidic residues. TPR repeat units follow at residues 126–160 (SRIR…DPAD), 161–194 (PRAY…TGNV), 196–229 (PYIW…DGTH), 231–263 (CAWH…CRRK), 269–302 (AYLY…AEGA), 305–338 (VALW…NPRS), 339–372 (RYVH…NPTD), 373–406 (PALY…DPSD), 408–440 (YMWQ…DPRS), and 444–477 (VYVF…DPKS). Disordered stretches follow at residues 540–563 (SDGN…EAAA) and 598–662 (LPDF…RSMG).

Part of a 300 kDa complex that associates with RNA.

It is found in the plastid. Its subcellular location is the chloroplast stroma. In terms of biological role, involved, directly or indirectly, in the processing of the chloroplast encoded psbB mRNA to its mature form, acting via the 5'-UTR of the psbB mRNA. The chain is PsbB mRNA maturation factor Mbb1, chloroplastic (MBB1) from Chlamydomonas reinhardtii (Chlamydomonas smithii).